The sequence spans 410 residues: Probable serine/threonine-protein kinase PBL9 (410 aa).

The N-myristoyl glycine moiety is linked to residue glycine 2. Cysteine 4 is lipidated: S-palmitoyl cysteine. Residues 11–46 form a disordered region; the sequence is AESSGASTKYDAKDIGSLGSKASSVSVRPSPRTEGE. The 285-residue stretch at 68 to 352 folds into the Protein kinase domain; the sequence is FRPDSVLGEG…MSEVVSHLEH (285 aa). ATP-binding positions include 74-82 and lysine 106; that span reads LGEGGFGCV. Position 151 is a phosphotyrosine (tyrosine 151). Aspartate 203 functions as the Proton acceptor in the catalytic mechanism. Phosphoserine occurs at positions 207 and 237. 2 positions are modified to phosphothreonine: threonine 238 and threonine 243. Residue tyrosine 251 is modified to Phosphotyrosine.

It belongs to the protein kinase superfamily. Ser/Thr protein kinase family. Interacts with the Xanthomonas campestris effector XopAC/AvrAC. As to expression, expressed in stomatal guard cells of leaves.

Its subcellular location is the cell membrane. The catalysed reaction is L-seryl-[protein] + ATP = O-phospho-L-seryl-[protein] + ADP + H(+). It carries out the reaction L-threonyl-[protein] + ATP = O-phospho-L-threonyl-[protein] + ADP + H(+). Functionally, possible bi-functional kinase. In vitro, it exhibits serine/threonine activity. In vivo, can phosphorylate tyrosine residues of limited substrates. May be involved in plant defense signaling. The sequence is that of Probable serine/threonine-protein kinase PBL9 from Arabidopsis thaliana (Mouse-ear cress).